The following is a 232-amino-acid chain: Heptaprenylglyceryl phosphate synthase (232 aa).

Position 12 (Lys-12) interacts with sn-glycerol 1-phosphate. 2 residues coordinate Mg(2+): Asp-14 and Thr-40. Residues 159–164, Gly-189, and 209–210 each bind sn-glycerol 1-phosphate; these read YLEYSG and GN.

The protein belongs to the GGGP/HepGP synthase family. Group I subfamily. Homodimer. Requires Mg(2+) as cofactor.

The catalysed reaction is sn-glycerol 1-phosphate + all-trans-heptaprenyl diphosphate = 3-heptaprenyl-sn-glycero-1-phosphate + diphosphate. The protein operates within membrane lipid metabolism; glycerophospholipid metabolism. Its function is as follows. Prenyltransferase that catalyzes in vivo the transfer of the heptaprenyl moiety of heptaprenyl pyrophosphate (HepPP; 35 carbon atoms) to the C3 hydroxyl of sn-glycerol-1-phosphate (G1P), producing heptaprenylglyceryl phosphate (HepGP). This reaction is an ether-bond-formation step in the biosynthesis of archaea-type G1P-based membrane lipids found in Bacillales. The protein is Heptaprenylglyceryl phosphate synthase of Shouchella clausii (strain KSM-K16) (Alkalihalobacillus clausii).